A 397-amino-acid polypeptide reads, in one-letter code: Riboflavin biosynthesis protein RibBA (397 aa).

Positions 1 to 199 (MFHRIEEALE…IEDLIAYRRH (199 aa)) are DHBP synthase. D-ribulose 5-phosphate is bound by residues 26–27 (RE), aspartate 31, 138–142 (RAGHT), and glutamate 162. Residue glutamate 27 coordinates Mg(2+). Histidine 141 contributes to the Mg(2+) binding site. The segment at 200 to 397 (HETLVTREVE…VNKLGHLLNL (198 aa)) is GTP cyclohydrolase II. 250 to 254 (RVHSE) contributes to the GTP binding site. Zn(2+)-binding residues include cysteine 255, cysteine 266, and cysteine 268. Residues glutamine 271, 293 to 295 (EGR), and threonine 315 contribute to the GTP site. Aspartate 327 (proton acceptor; for GTP cyclohydrolase activity) is an active-site residue. Arginine 329 serves as the catalytic Nucleophile; for GTP cyclohydrolase activity. GTP contacts are provided by threonine 350 and lysine 355.

This sequence in the N-terminal section; belongs to the DHBP synthase family. In the C-terminal section; belongs to the GTP cyclohydrolase II family. Mg(2+) is required as a cofactor. The cofactor is Mn(2+). It depends on Zn(2+) as a cofactor.

The catalysed reaction is D-ribulose 5-phosphate = (2S)-2-hydroxy-3-oxobutyl phosphate + formate + H(+). The enzyme catalyses GTP + 4 H2O = 2,5-diamino-6-hydroxy-4-(5-phosphoribosylamino)-pyrimidine + formate + 2 phosphate + 3 H(+). It functions in the pathway cofactor biosynthesis; riboflavin biosynthesis; 2-hydroxy-3-oxobutyl phosphate from D-ribulose 5-phosphate: step 1/1. It participates in cofactor biosynthesis; riboflavin biosynthesis; 5-amino-6-(D-ribitylamino)uracil from GTP: step 1/4. In terms of biological role, catalyzes the conversion of D-ribulose 5-phosphate to formate and 3,4-dihydroxy-2-butanone 4-phosphate. Its function is as follows. Catalyzes the conversion of GTP to 2,5-diamino-6-ribosylamino-4(3H)-pyrimidinone 5'-phosphate (DARP), formate and pyrophosphate. This Bacillus cereus (strain G9842) protein is Riboflavin biosynthesis protein RibBA.